The primary structure comprises 239 residues: Tetraspanin-9 (239 aa).

The Cytoplasmic portion of the chain corresponds to 1-13 (MARGCLCCVKYMM). The chain crosses the membrane as a helical span at residues 14 to 34 (FLFNLLFWLSGCGLLGVGIWL). The Extracellular segment spans residues 35-55 (SVSQGSFATFSPSFPSLSAAN). A helical transmembrane segment spans residues 56–76 (LVITLGSVVMVTGFLGCLGAI). The Cytoplasmic portion of the chain corresponds to 77 to 85 (KENKCLLLS). A helical transmembrane segment spans residues 86-106 (FFIVLLIILLAELILLILFFV). Over 107–203 (YTEKVSENAK…VEEWLNDNKH (97 aa)) the chain is Extracellular. N180 is a glycosylation site (N-linked (GlcNAc...) asparagine). The helical transmembrane segment at 204–224 (LLGTIAMCVLVLQLLGMAFSM) threads the bilayer. At 225 to 239 (TLYQQIHRAGKKYDA) the chain is on the cytoplasmic side.

This sequence belongs to the tetraspanin (TM4SF) family.

Its subcellular location is the membrane. In Danio rerio (Zebrafish), this protein is Tetraspanin-9 (tspan9).